The following is a 252-amino-acid chain: MARFFIYLAYNGTRYSGWQTQPNAPSVQQTVEEAISTIVRQPVGVVGAGRTDAGVHAHEMVAHADLPCDTPAEAATLTERLNKLLPRDIVIYRMAPVKADAHARFDAISRTYHYYLTEQKDPFMEGLMLKTYRKLDFERMNEAAALLPRYIDFTSFSKLHTDVKTNNCRITEARWMPLAQTGQWVFSITADRFLRNMVRAIVGTLFHVGTGKLSITDFRDIIESQDRSRAGSSAPAHALYLERVVYPSDLFL.

Aspartate 52 functions as the Nucleophile in the catalytic mechanism. Tyrosine 112 is a substrate binding site.

Belongs to the tRNA pseudouridine synthase TruA family. As to quaternary structure, homodimer.

The enzyme catalyses uridine(38/39/40) in tRNA = pseudouridine(38/39/40) in tRNA. Functionally, formation of pseudouridine at positions 38, 39 and 40 in the anticodon stem and loop of transfer RNAs. The chain is tRNA pseudouridine synthase A from Porphyromonas gingivalis (strain ATCC 33277 / DSM 20709 / CIP 103683 / JCM 12257 / NCTC 11834 / 2561).